The chain runs to 1136 residues: MDSLIIEEEDEEALATLVPVPPRRKTHSYSLQFDHKPHHQIRKHSLDEVPRSATLASEAVYFDSSDDEFSTGGNITENAADETNAGAEEYTIVNPPPNVGLGDDDTEPLPEFIGAGGGSGIFKVPVRAAVHPGRPPCLELRPHPLRETQTGRFLRNIACTETQLWAGQENGIRFWNLEDAYEAGCGIGGQVPRGDEDTAPFHESVTTSPTMCLVADQSNKLLWSGHKDGKIRAWKMDQSSVSHDDDDSDPFKERVSWLAHRGPVNSIVISSYGDMWSCSEGGVIKIWPWDTLEKSLLLKPEEKHMAALLVERSAIDLRSQVTVNGTCSISSSEVKFLLADSVRAKVWAVQSLSFSIWDARSKDLLKVLNVDGQVENRGDLPPIQDQQVDDEMKLKFFSASKREKPQGFLQRSRNAIMGAAGAVRRVATRSAGAFSEDTRKTEAIVLAVDGTIWTGSISGLIVQWDGNGNRLRDVNHHHRPVLCFCTFGDRIYVGYASGYIQVLDLDGKLISSWVSHNEPVIKLAAGGGFIFSLATHGGVRGWYVTSPGPLDNIIRTELSQKETLYARQDNVRILIGTWNVGQGRASHDALMSWLGSVTSDVGIVAVGLQEVEMGAGFLAMSAAKETVGLEGSAVGQWWIDAIGKALDEKNTFERMGSRQLAGLLISLWARKDIRTHVGDLDVAAVPCGFGRAIGNKGGVGLRIRVYDRIMCFVNCHLAAHLEAVNRRNADFNHIFRLMVFSRGQNLSNAAAAGVSTSAYTTKSNTIPSTGAEEIKSDLAAADMVAFFGDFNYRLFGITYDEARDFISQRSFDWLRERDQLRAEMKVGKVFQGMREALITFPPTYKFERNRSGLGGYDSGEKKRIPAWCDRVIYRDTQSSPFSESNLQCPVVSSVIMYEACMDVTESDHKPVRCKFHATIAHVDKSVRRQELGKIIRSNEKILSIFEDLRFVPETSVSTNNIVLQSQDTVILTITNNSPTSQAIFNILCGGQAVVKDDGEDADYNPRGSFGLPRWLEVSPAAGIINPEGSVDVKVHHEDFYSMEEYVDGIPQNWWCEDTRDKEAILMVNIRGSCSTTLRSHSVKVRHCFSARVCLLENRPTNLTKNLGGSRRYPTDITRNGSTRPRTEDSVRRGKSR.

WD repeat units follow at residues 147–185, 205–244, 259–297, 436–475, and 515–552; these read ETQT…EAGC, VTTS…VSHD, AHRG…KSLL, EDTR…RDVN, and SHNE…PLDN. Catalytic stretches follow at residues 782–798 and 861–876; these read DMVA…FGIT and KKRI…YRDT. Lys-940 is covalently cross-linked (Glycyl lysine isopeptide (Lys-Gly) (interchain with G-Cter in ubiquitin)). Residues 1104 to 1136 are disordered; that stretch reads KNLGGSRRYPTDITRNGSTRPRTEDSVRRGKSR. The segment covering 1124–1136 has biased composition (basic and acidic residues); the sequence is PRTEDSVRRGKSR.

This sequence belongs to the inositol polyphosphate 5-phosphatase family. Interacts with KIN10, but not with PHOT1. Requires Mg(2+) as cofactor. As to expression, expressed in young seedlings and flowers. Highly expressed in anther and pollen grains, but not in pistils. Not detected in maturated roots, stems and rosette leaves.

It is found in the nucleus. It catalyses the reaction 1D-myo-inositol 1,4,5-trisphosphate + H2O = 1D-myo-inositol 1,4-bisphosphate + phosphate. Functionally, converts inositol 1,4,5-trisphosphate (Ins(1,4,5)P3) to inositol 1,4-bisphosphate. Modulates cotyledon vein development through regulating auxin homeostasis. Involved in blue light responses. Decreases the amount of KIN10 degraded by the proteasome under low nutrient conditions. Participates with IP5P12 in the control of Ins(1,4,5)P3/Ca(2+) levels that is crucial for maintaining pollen dormancy and regulating early germination of pollen. May modulate auxin transport by regulating vesicle trafficking and thereby plays a role in root gravitropism. The sequence is that of Type I inositol polyphosphate 5-phosphatase 13 from Arabidopsis thaliana (Mouse-ear cress).